A 1077-amino-acid chain; its full sequence is RNA polymerase-associated protein CTR9 (1077 aa).

16 TPR repeats span residues 56–89, 138–174, 183–216, 218–251, 298–332, 338–371, 373–405, 421–455, 462–495, 501–534, 540–572, 664–697, 699–731, 732–764, 768–801, and 830–863; these read KEHW…FQNS, IGNM…EDHR, CLFL…NPVL, PDPR…NPKN, PVLL…SPMI, SESS…NEDN, LAKL…NESL, FDAK…TLAT, SRAY…MEFI, LEVL…VSDK, ITLE…HPAY, GKKS…DPFN, FAAQ…LDNE, DVQL…FDNE, PHIL…AKTA, and AETL…FREL. The span at 959-980 shows a compositional bias: basic and acidic residues; sequence EREAMAISEHNVKDDSDLSDKD. The disordered stretch occupies residues 959–1077; the sequence is EREAMAISEH…NDNDDNDGLF (119 aa). Phosphoserine occurs at positions 1015 and 1017. Acidic residues-rich tracts occupy residues 1042-1051 and 1063-1077; these read FIEDSDEEEA and DNDE…DGLF.

As to quaternary structure, component of the PAF1 complex which consists of at least CDC73, CTR9, LEO1, PAF1 and RTF1. Interacts with SPT6. Interacts with FACT subunits POB3 and SPT16.

It localises to the nucleus. Its subcellular location is the nucleoplasm. The PAF1 complex is a multifunctional complex. Involved in transcription initiation via genetic interactions with TATA-binding proteins. Involved in elongation. It regulates 3'-end formation of snR47 by modulating the recruitment or stable association of NRD1 and NAB3 with RNA polymerase II. Also has a role in transcription-coupled histone modification. Required for activation of RAD6 ubiquitin conjugate and the BRE1 ubiquitin ligase which ubiquitinate 'Lys-126' histone H2B. Activates the SET1 histone methyltransferase complex for methylation of 'Lys-4' of histone H3 and for methylation of 'Lys-73' of histone H3 by DOT1 and 'Lys-36' of histone H3 by SET2. In complex with PAF1, required for normal CLN1 and CLN2 G1 cyclin expression in late G1. Also has a role in chromosome segregation where it appears to be involved in microtubule placement. This chain is RNA polymerase-associated protein CTR9 (CTR9), found in Saccharomyces cerevisiae (strain ATCC 204508 / S288c) (Baker's yeast).